The primary structure comprises 131 residues: Large ribosomal subunit protein bL12 (131 aa).

This sequence belongs to the bacterial ribosomal protein bL12 family. In terms of assembly, homodimer. Part of the ribosomal stalk of the 50S ribosomal subunit. Forms a multimeric L10(L12)X complex, where L10 forms an elongated spine to which 2 to 4 L12 dimers bind in a sequential fashion. Binds GTP-bound translation factors.

In terms of biological role, forms part of the ribosomal stalk which helps the ribosome interact with GTP-bound translation factors. Is thus essential for accurate translation. In Prochlorococcus marinus (strain MIT 9301), this protein is Large ribosomal subunit protein bL12.